A 131-amino-acid polypeptide reads, in one-letter code: MLSAARLIAPAARSAIFSNAAVVRPLAAVSTQTQLVPAAPAQLSAVRSFQTTSVTKDIDSAAKFIGAGAATVGVAGSGAGIGTVFGSLIIGYARNPSLKQQLFSYAILGFALSEAMGLFCLMMAFLLLFAF.

The N-terminal 56 residues, 1–56 (MLSAARLIAPAARSAIFSNAAVVRPLAAVSTQTQLVPAAPAQLSAVRSFQTTSVTK), are a transit peptide targeting the mitochondrion. Residues 72–92 (VGVAGSGAGIGTVFGSLIIGY) form a helical membrane-spanning segment. Residue Lys99 is modified to N6,N6,N6-trimethyllysine. The helical transmembrane segment at 107–127 (ILGFALSEAMGLFCLMMAFLL) threads the bilayer.

Belongs to the ATPase C chain family. As to quaternary structure, F-type ATPases have 2 components, CF(1) - the catalytic core - and CF(0) - the membrane proton channel. CF(1) has five subunits: alpha(3), beta(3), gamma(1), delta(1), epsilon(1). CF(0) has three main subunits: a, b and c. Trimethylated by ATPSCKMT at Lys-99. Methylation may be required for proper incorporation of the C subunit into the ATP synthase complex and mitochondrial respiration.

The protein localises to the mitochondrion membrane. Its function is as follows. Mitochondrial membrane ATP synthase (F(1)F(0) ATP synthase or Complex V) produces ATP from ADP in the presence of a proton gradient across the membrane which is generated by electron transport complexes of the respiratory chain. F-type ATPases consist of two structural domains, F(1) - containing the extramembraneous catalytic core and F(0) - containing the membrane proton channel, linked together by a central stalk and a peripheral stalk. During catalysis, ATP synthesis in the catalytic domain of F(1) is coupled via a rotary mechanism of the central stalk subunits to proton translocation. Part of the complex F(0) domain. A homomeric c-ring of probably 10 subunits is part of the complex rotary element. The sequence is that of ATP synthase lipid-binding protein, mitochondrial from Manduca sexta (Tobacco hawkmoth).